Reading from the N-terminus, the 130-residue chain is Transcription antitermination protein NusB (130 aa).

Belongs to the NusB family.

Its function is as follows. Involved in transcription antitermination. Required for transcription of ribosomal RNA (rRNA) genes. Binds specifically to the boxA antiterminator sequence of the ribosomal RNA (rrn) operons. In Bacillus mycoides (strain KBAB4) (Bacillus weihenstephanensis), this protein is Transcription antitermination protein NusB.